The sequence spans 415 residues: D-galactonate dehydratase family member RspA (415 aa).

Positions 48 and 133 each coordinate substrate. The active-site Proton donor/acceptor is the tyrosine 170. Aspartate 223 provides a ligand contact to Mg(2+). Histidine 225 (proton donor/acceptor) is an active-site residue. Mg(2+) is bound by residues glutamate 249, aspartate 250, and glutamate 275. Substrate contacts are provided by glutamate 275, arginine 296, histidine 325, aspartate 329, and glutamate 352.

This sequence belongs to the mandelate racemase/muconate lactonizing enzyme family. GalD subfamily. The cofactor is Mg(2+).

It carries out the reaction D-mannonate = 2-dehydro-3-deoxy-D-gluconate + H2O. In terms of biological role, has low D-mannonate dehydratase activity (in vitro), suggesting that this is not a physiological substrate and that it has no significant role in D-mannonate degradation in vivo. Has no detectable activity with a panel of 70 other acid sugars (in vitro). The protein is D-galactonate dehydratase family member RspA (rspA) of Escherichia coli O6:H1 (strain CFT073 / ATCC 700928 / UPEC).